The chain runs to 949 residues: Phosphocholine transferase AnkX (949 aa).

The 135-residue stretch at 155 to 289 (LNPEQIPDLA…IFNTVEIIEQ (135 aa)) folds into the Fido domain. ANK repeat units follow at residues 391-420 (VGKT…DLSL), 424-453 (DGKT…SQED), 464-494 (HGKT…QINE), 498-527 (SGSS…DISD), 554-583 (LNKE…DIDI), 588-617 (DKAT…NTRL), 658-687 (NGNP…RVDF), 691-720 (LGNN…TLLH), 725-767 (ERRN…DLNK), and 771-800 (KGKT…HTNI).

The protein localises to the secreted. It localises to the host cytoplasm. It carries out the reaction [Rab1 protein]-L-serine + CDP-choline = [Rab1 protein]-O-phosphocholine-L-serine + CMP + H(+). Virulence effector that plays a role in hijacking the host vesicular trafficking by recruiting the small guanosine triphosphatase (GTPase) Rab1 to the cytosolic face of the Legionella-containing vacuole (LCVs). Acts as a phosphocholine transferase by mediating the addition of phosphocholine to Ser residues of host RAB1 (RAB1A, RAB1B or RAB1C) and RAB35, leading to displacement of GDP dissociation inhibitors (GDI). Phosphocholination of target proteins also impairs accessibility to GTPase effector LepB. Can act on both GDP-bound and GTP-bound Rab proteins. The polypeptide is Phosphocholine transferase AnkX (ankX) (Legionella pneumophila subsp. pneumophila (strain Philadelphia 1 / ATCC 33152 / DSM 7513)).